The following is a 286-amino-acid chain: Pantothenate synthetase (286 aa).

ATP is bound at residue 30-37 (MGFLHEGH). Catalysis depends on H37, which acts as the Proton donor. Q61 contributes to the (R)-pantoate binding site. Q61 lines the beta-alanine pocket. 147–150 (GLKD) provides a ligand contact to ATP. Q153 contacts (R)-pantoate. Residues V176 and 184–187 (KSSR) contribute to the ATP site.

This sequence belongs to the pantothenate synthetase family. In terms of assembly, homodimer.

The protein resides in the cytoplasm. The catalysed reaction is (R)-pantoate + beta-alanine + ATP = (R)-pantothenate + AMP + diphosphate + H(+). It participates in cofactor biosynthesis; (R)-pantothenate biosynthesis; (R)-pantothenate from (R)-pantoate and beta-alanine: step 1/1. Functionally, catalyzes the condensation of pantoate with beta-alanine in an ATP-dependent reaction via a pantoyl-adenylate intermediate. This is Pantothenate synthetase from Bacillus velezensis (strain DSM 23117 / BGSC 10A6 / LMG 26770 / FZB42) (Bacillus amyloliquefaciens subsp. plantarum).